The following is a 195-amino-acid chain: Orotate phosphoribosyltransferase (195 aa).

Residues R87, K91, and 112–120 (DDVATTGGS) each bind 5-phospho-alpha-D-ribose 1-diphosphate. Positions 116 and 144 each coordinate orotate.

Belongs to the purine/pyrimidine phosphoribosyltransferase family. PyrE subfamily. Homodimer. The cofactor is Mg(2+).

The catalysed reaction is orotidine 5'-phosphate + diphosphate = orotate + 5-phospho-alpha-D-ribose 1-diphosphate. It participates in pyrimidine metabolism; UMP biosynthesis via de novo pathway; UMP from orotate: step 1/2. In terms of biological role, catalyzes the transfer of a ribosyl phosphate group from 5-phosphoribose 1-diphosphate to orotate, leading to the formation of orotidine monophosphate (OMP). This chain is Orotate phosphoribosyltransferase, found in Sulfurisphaera tokodaii (strain DSM 16993 / JCM 10545 / NBRC 100140 / 7) (Sulfolobus tokodaii).